The primary structure comprises 892 residues: Alanine--tRNA ligase (892 aa).

Positions 594, 598, 702, and 706 each coordinate Zn(2+).

The protein belongs to the class-II aminoacyl-tRNA synthetase family. It depends on Zn(2+) as a cofactor.

It localises to the cytoplasm. The catalysed reaction is tRNA(Ala) + L-alanine + ATP = L-alanyl-tRNA(Ala) + AMP + diphosphate. Functionally, catalyzes the attachment of alanine to tRNA(Ala) in a two-step reaction: alanine is first activated by ATP to form Ala-AMP and then transferred to the acceptor end of tRNA(Ala). Also edits incorrectly charged Ser-tRNA(Ala) and Gly-tRNA(Ala) via its editing domain. The sequence is that of Alanine--tRNA ligase from Pyrobaculum arsenaticum (strain DSM 13514 / JCM 11321 / PZ6).